Reading from the N-terminus, the 244-residue chain is tRNA (guanine-N(1)-)-methyltransferase (244 aa).

Residues Gly-113 and 133-138 (IGDYVL) each bind S-adenosyl-L-methionine.

It belongs to the RNA methyltransferase TrmD family. Homodimer.

Its subcellular location is the cytoplasm. The enzyme catalyses guanosine(37) in tRNA + S-adenosyl-L-methionine = N(1)-methylguanosine(37) in tRNA + S-adenosyl-L-homocysteine + H(+). Specifically methylates guanosine-37 in various tRNAs. This chain is tRNA (guanine-N(1)-)-methyltransferase, found in Bacillus cereus (strain B4264).